The primary structure comprises 272 residues: Acidic leucine-rich nuclear phosphoprotein 32 family member B (272 aa).

4 LRR repeats span residues Pro-16–Glu-40, Asn-43–Pro-64, Lys-65–Ala-84, and Ser-89–Lys-110. An LRRCT domain is found at Cys-123 to Glu-161. Over residues Asp-149–Glu-254 the composition is skewed to acidic residues. A disordered region spans residues Asp-149–Asp-272. Phosphoserine is present on residues Ser-164 and Ser-171. Basic and acidic residues predominate over residues Ser-255 to Thr-265. The short motif at Lys-260 to Arg-263 is the Nuclear localization signal element. Position 265 is a phosphothreonine (Thr-265).

This sequence belongs to the ANP32 family. As to quaternary structure, interacts with histones H3 and H4. Interacts with KLF5; this interaction induces promoter region-specific histone incorporation and inhibition of histone acetylation by ANP32B. Post-translationally, some glutamate residues are glycylated by TTLL8. This modification occurs exclusively on glutamate residues and results in a glycine chain on the gamma-carboxyl group. Directly cleaved by caspase-3/CASP3. In terms of tissue distribution, predominantly expressed in brain. Expressed in the entire embryonic brain, whereas in the adult brain its expression is restricted to the subventricular zone where there are neural progenitor cells.

The protein resides in the nucleus. Multifunctional protein that is involved in the regulation of many processes including cell proliferation, apoptosis, cell cycle progression or transcription. Regulates the proliferation of neuronal stem cells, differentiation of leukemic cells and progression from G1 to S phase of the cell cycle. As negative regulator of caspase-3-dependent apoptosis, may act as an antagonist of ANP32A in regulating tissue homeostasis. Exhibits histone chaperone properties, able to recruit histones to certain promoters, thus regulating the transcription of specific genes. Also plays an essential role in the nucleocytoplasmic transport of specific mRNAs via the uncommon nuclear mRNA export receptor XPO1/CRM1. Participates in the regulation of adequate adaptive immune responses by acting on mRNA expression and cell proliferation. This is Acidic leucine-rich nuclear phosphoprotein 32 family member B (Anp32b) from Rattus norvegicus (Rat).